Reading from the N-terminus, the 278-residue chain is S-formylglutathione hydrolase YeiG (278 aa).

Catalysis depends on charge relay system residues Ser145, Asp223, and His256.

It belongs to the esterase D family.

The enzyme catalyses S-formylglutathione + H2O = formate + glutathione + H(+). Its function is as follows. Serine hydrolase involved in the detoxification of formaldehyde. Hydrolyzes S-formylglutathione to glutathione and formate. This chain is S-formylglutathione hydrolase YeiG (yeiG), found in Escherichia coli O157:H7.